The chain runs to 254 residues: Ubiquinone biosynthesis O-methyltransferase (254 aa).

The S-adenosyl-L-methionine site is built by Arg-47, Gly-78, Asp-99, and Met-141.

The protein belongs to the methyltransferase superfamily. UbiG/COQ3 family.

It carries out the reaction a 3-demethylubiquinol + S-adenosyl-L-methionine = a ubiquinol + S-adenosyl-L-homocysteine + H(+). The enzyme catalyses a 3-(all-trans-polyprenyl)benzene-1,2-diol + S-adenosyl-L-methionine = a 2-methoxy-6-(all-trans-polyprenyl)phenol + S-adenosyl-L-homocysteine + H(+). It participates in cofactor biosynthesis; ubiquinone biosynthesis. Functionally, O-methyltransferase that catalyzes the 2 O-methylation steps in the ubiquinone biosynthetic pathway. The polypeptide is Ubiquinone biosynthesis O-methyltransferase (Rhodopseudomonas palustris (strain BisB18)).